Reading from the N-terminus, the 2792-residue chain is E3 ubiquitin-protein ligase UBR5 (2792 aa).

Threonine 2 is modified (N-acetylthreonine). Over residues 77–88 the composition is skewed to basic and acidic residues; that stretch reads DRLELGKPDNND. Residues 77–175 are disordered; sequence DRLELGKPDN…DRGSGLLGSQ (99 aa). Residues 94–111 are compositionally biased toward low complexity; that stretch reads SSSGTGRTSRPGRTSDSP. Position 110 is a phosphoserine (serine 110). Over residues 135–144 the composition is skewed to gly residues; it reads GVGGSGGGSS. The region spanning 184 to 226 is the UBA domain; the sequence is VIPEELISQAQVVLQGKSRSVIIRELQRTNLDVNLAVNNLLSR. Phosphoserine is present on serine 321. The segment covering 322–341 has biased composition (basic and acidic residues); the sequence is FDNERGSTSKEGESNPDKKN. The disordered stretch occupies residues 322-347; that stretch reads FDNERGSTSKEGESNPDKKNTPVQSP. A phosphoserine mark is found at serine 346 and serine 572. Residues 577–598 are compositionally biased toward basic and acidic residues; it reads KSMEKASKTLETKPESKQEPVK. Residues 577–642 are disordered; it reads KSMEKASKTL…APREEEKVNE (66 aa). At serine 606 the chain carries Phosphoserine. The segment covering 608-622 has biased composition (low complexity); it reads ASTCSDASSIASSAS. The residue at position 631 (threonine 631) is a Phosphothreonine. 3 positions are modified to phosphoserine: serine 802, serine 922, and serine 1012. 2 disordered regions span residues 993–1029 and 1046–1069; these read AGLG…SMDP and TAAT…EPSV. Positions 1011–1027 are enriched in pro residues; it reads VSPPIAPPSWVPDPPSM. The span at 1046–1067 shows a compositional bias: polar residues; that stretch reads TAATGSGQGPSTSTIPGPSTEP. 2 positions are modified to phosphothreonine: threonine 1109 and threonine 1129. The UBR-type zinc finger occupies 1171–1239; it reads DTCSFTWTGA…EKCKCKTLIA (69 aa). A phosphoserine mark is found at serine 1221, serine 1302, serine 1349, serine 1369, and serine 1475. Positions 1293 to 1312 are disordered; sequence REDRNRKTASPEDSDMPDHD. The segment at 1509-1734 is disordered; the sequence is SVEPLPPRPS…PSSTSTPAAS (226 aa). Positions 1518-1531 are enriched in low complexity; sequence SSDQASSSSQSQSS. Polar residues predominate over residues 1532-1547; the sequence is YIIRNPQQRRISQSQP. Residue serine 1543 is modified to Phosphoserine. Composition is skewed to acidic residues over residues 1553-1568 and 1599-1608; these read EEQD…EVEV and HDEDGSDMEL. The span at 1623 to 1632 shows a compositional bias: polar residues; it reads NHSNQDNASG. Low complexity-rich tracts occupy residues 1635–1651, 1662–1675, and 1720–1734; these read SVVT…ASSV, SNDS…SSQS, and AAST…PAAS. Threonine 1730 bears the Phosphothreonine mark. Phosphoserine is present on serine 1735. The residue at position 1740 (tyrosine 1740) is a Phosphotyrosine. At serine 1774 the chain carries Phosphoserine. Positions 1853-1884 are disordered; that stretch reads LASAGDPGHPNHPLHASQNSARRERMTAREEA. Residues 1873 to 1884 show a composition bias toward basic and acidic residues; it reads ARRERMTAREEA. A Phosphothreonine modification is found at threonine 1963. The segment at 1978–2015 is disordered; the sequence is GIDNEDSEHENDDDTSQSATLNDKDDDSLPAETGQNHP. Over residues 1979-1992 the composition is skewed to acidic residues; sequence IDNEDSEHENDDDT. 3 positions are modified to phosphoserine: serine 1984, serine 2020, and serine 2022. Phosphothreonine is present on threonine 2024. Position 2070 is a phosphoserine (serine 2070). The segment at 2111-2137 is disordered; it reads RQKKEGEEQSLLAEEADSSKPGPSAPD. At threonine 2207 the chain carries Phosphothreonine. Phosphoserine is present on residues serine 2235 and serine 2283. A disordered region spans residues 2317–2387; the sequence is HTSLMQRLRN…SDDPDPLPAH (71 aa). Basic and acidic residues-rich tracts occupy residues 2326-2342 and 2350-2362; these read NRGE…EMRR and SRRD…RRQL. Residues 2371-2448 enclose the PABC domain; sequence PASEGNPSDD…AMELIIAHGR (78 aa). The 338-residue stretch at 2455 to 2792 folds into the HECT domain; it reads ILDLGLLDSS…AIKTKNFGFV (338 aa). A phosphoserine mark is found at serine 2463, serine 2477, and serine 2479. A disordered region spans residues 2467 to 2494; that stretch reads VQENRKRHGSSRSVVDMDLEDTDDGDDN. Residues 2483-2493 are compositionally biased toward acidic residues; the sequence is MDLEDTDDGDD. Cysteine 2761 functions as the Glycyl thioester intermediate in the catalytic mechanism.

The protein belongs to the UBR5 family. In terms of assembly, homotetramer; composed of a dimer of dimers. Associates with CDK9 and TFIIS/TCEA1 and forms a transcription regulatory complex made of CDK9, RNAP II, UBR5 and TFIIS/TCEA1 that can stimulate target gene transcription (e.g. gamma fibrinogen/FGG) by recruiting their promoters. Associates with the E3 ligase complex containing DYRK2, EDD/UBR5, DDB1 and DCAF1 proteins (EDVP complex). Binds TOPBP1. Interacts with PIH1D1. Interacts with CIB1.

The protein resides in the nucleus. It localises to the cytoplasm. It catalyses the reaction S-ubiquitinyl-[E2 ubiquitin-conjugating enzyme]-L-cysteine + [acceptor protein]-L-lysine = [E2 ubiquitin-conjugating enzyme]-L-cysteine + N(6)-ubiquitinyl-[acceptor protein]-L-lysine.. It functions in the pathway protein modification; protein ubiquitination. In terms of biological role, E3 ubiquitin-protein ligase involved in different protein quality control pathways in the cytoplasm and nucleus. Mainly acts as a ubiquitin chain elongator that extends pre-ubiquitinated substrates. Component of the N-end rule pathway: ubiquitinates proteins bearing specific N-terminal residues that are destabilizing according to the N-end rule, leading to their degradation. Recognizes type-1 N-degrons, containing positively charged amino acids (Arg, Lys and His). Together with UBR4, part of a cytoplasm protein quality control pathway that prevents protein aggregation by catalyzing assembly of heterotypic 'Lys-11'-/'Lys-48'-linked branched ubiquitin chains on aggregated proteins, leading to substrate recognition by the segregase p97/VCP and degradation by the proteasome: UBR5 is probably branching multiple 'Lys-48'-linked chains of substrates initially modified with mixed conjugates by UBR4. Together with ITCH, catalyzes 'Lys-48'-/'Lys-63'-branched ubiquitination of TXNIP, leading to its degradation: UBR5 mediates branching of 'Lys-48'-linked chains of substrates initially modified with 'Lys-63'-linked conjugates by ITCH. Catalytic component of a nuclear protein quality control pathway that mediates ubiquitination and degradation of unpaired transcription factors (i.e. transcription factors that are not assembled into functional multiprotein complexes): specifically recognizes and binds degrons that are not accessible when transcription regulators are associated with their coactivators. Ubiquitinates various unpaired transcription regulator (MYC, SUPT4H1, SUPT5H, CDC20 and MCRS1), as well as ligand-bound nuclear receptors (ESR1, NR1H3, NR3C1, PGR, RARA, RXRA AND VDR) that are not associated with their nuclear receptor coactivators (NCOAs). Involved in maturation and/or transcriptional regulation of mRNA by mediating polyubiquitination and activation of CDK9. Also acts as a regulator of DNA damage response by acting as a suppressor of RNF168, an E3 ubiquitin-protein ligase that promotes accumulation of 'Lys-63'-linked histone H2A and H2AX at DNA damage sites, thereby acting as a guard against excessive spreading of ubiquitinated chromatin at damaged chromosomes. Regulates DNA topoisomerase II binding protein (TopBP1) in the DNA damage response. Ubiquitinates acetylated PCK1. Acts as a positive regulator of the canonical Wnt signaling pathway by mediating (1) ubiquitination and stabilization of CTNNB1, and (2) 'Lys-48'-linked ubiquitination and degradation of TLE3. Promotes disassembly of the mitotic checkpoint complex (MCC) from the APC/C complex by catalyzing ubiquitination of BUB1B, BUB3 and CDC20. Plays an essential role in extraembryonic development. Required for the maintenance of skeletal tissue homeostasis by acting as an inhibitor of hedgehog (HH) signaling. This chain is E3 ubiquitin-protein ligase UBR5, found in Mus musculus (Mouse).